A 339-amino-acid chain; its full sequence is Phosphate acyltransferase (339 aa).

This sequence belongs to the PlsX family. In terms of assembly, homodimer. Probably interacts with PlsY.

Its subcellular location is the cytoplasm. The catalysed reaction is a fatty acyl-[ACP] + phosphate = an acyl phosphate + holo-[ACP]. It participates in lipid metabolism; phospholipid metabolism. Catalyzes the reversible formation of acyl-phosphate (acyl-PO(4)) from acyl-[acyl-carrier-protein] (acyl-ACP). This enzyme utilizes acyl-ACP as fatty acyl donor, but not acyl-CoA. This Pasteurella multocida (strain Pm70) protein is Phosphate acyltransferase.